We begin with the raw amino-acid sequence, 127 residues long: Aspartate 1-decarboxylase (127 aa).

Residue Ser-25 is the Schiff-base intermediate with substrate; via pyruvic acid of the active site. Ser-25 bears the Pyruvic acid (Ser) mark. Position 57 (Thr-57) interacts with substrate. Tyr-58 (proton donor) is an active-site residue. Residue 73–75 coordinates substrate; that stretch reads GAA.

This sequence belongs to the PanD family. In terms of assembly, heterooctamer of four alpha and four beta subunits. Requires pyruvate as cofactor. Is synthesized initially as an inactive proenzyme, which is activated by self-cleavage at a specific serine bond to produce a beta-subunit with a hydroxyl group at its C-terminus and an alpha-subunit with a pyruvoyl group at its N-terminus.

The protein localises to the cytoplasm. It carries out the reaction L-aspartate + H(+) = beta-alanine + CO2. Its pathway is cofactor biosynthesis; (R)-pantothenate biosynthesis; beta-alanine from L-aspartate: step 1/1. In terms of biological role, catalyzes the pyruvoyl-dependent decarboxylation of aspartate to produce beta-alanine. The polypeptide is Aspartate 1-decarboxylase (Clostridium acetobutylicum (strain ATCC 824 / DSM 792 / JCM 1419 / IAM 19013 / LMG 5710 / NBRC 13948 / NRRL B-527 / VKM B-1787 / 2291 / W)).